A 630-amino-acid chain; its full sequence is Plastin-3 (630 aa).

EF-hand domains are found at residues 12–47 (DELD…ANMP) and 52–87 (KVRE…VKSS). Ca(2+) contacts are provided by D25, N27, N29, E36, D65, N67, D69, K71, and E76. 2 actin-binding regions span residues 109–382 (TSEL…ALTK) and 383–627 (PENQ…GRGM). Calponin-homology (CH) domains lie at 123-239 (EEEK…KIGL) and 267-378 (LSPE…NKYP). A phosphoserine mark is found at S268, S293, S326, and S339. Phosphothreonine is present on T391. Calponin-homology (CH) domains are found at residues 397 to 506 (TREE…RRYT) and 518 to 627 (KATD…GRGM).

Monomer.

The protein resides in the cytoplasm. Functionally, actin-bundling protein. This Rattus norvegicus (Rat) protein is Plastin-3 (Pls3).